A 144-amino-acid chain; its full sequence is Large ribosomal subunit protein uL15 (144 aa).

The segment at M1–I48 is disordered. The segment covering R21–C31 has biased composition (gly residues).

The protein belongs to the universal ribosomal protein uL15 family. In terms of assembly, part of the 50S ribosomal subunit.

Binds to the 23S rRNA. This Shewanella woodyi (strain ATCC 51908 / MS32) protein is Large ribosomal subunit protein uL15.